The chain runs to 343 residues: Methionine import ATP-binding protein MetN (343 aa).

The 240-residue stretch at isoleucine 2–isoleucine 241 folds into the ABC transporter domain. Residue glycine 38 to serine 45 participates in ATP binding.

Belongs to the ABC transporter superfamily. Methionine importer (TC 3.A.1.24) family. As to quaternary structure, the complex is composed of two ATP-binding proteins (MetN), two transmembrane proteins (MetI) and a solute-binding protein (MetQ).

It is found in the cell inner membrane. The catalysed reaction is L-methionine(out) + ATP + H2O = L-methionine(in) + ADP + phosphate + H(+). The enzyme catalyses D-methionine(out) + ATP + H2O = D-methionine(in) + ADP + phosphate + H(+). Its function is as follows. Part of the ABC transporter complex MetNIQ involved in methionine import. Responsible for energy coupling to the transport system. The protein is Methionine import ATP-binding protein MetN of Shigella flexneri serotype 5b (strain 8401).